A 953-amino-acid polypeptide reads, in one-letter code: Communesin biosynthesis cluster-specific transcription factor cnsN (953 aa).

A disordered region spans residues 371–418; that stretch reads ELESTSPRTSHSSLSQDDTASLHSRSSLSSSPGRFPPSQKLVATSDSP. Low complexity predominate over residues 374–408; sequence STSPRTSHSSLSQDDTASLHSRSSLSSSPGRFPPS.

The protein resides in the nucleus. In terms of biological role, transcriptional regulator; part of the gene cluster that mediates the biosynthesis of communesins, a prominent class of indole alkaloids with great potential as pharmaceuticals. This is Communesin biosynthesis cluster-specific transcription factor cnsN from Penicillium expansum (Blue mold rot fungus).